The chain runs to 371 residues: Cytochrome b (371 aa).

The next 4 membrane-spanning stretches (helical) occupy residues 25-45 (FGSMLLTCLALQVLTGFFLAV), 69-90 (WMMQNLHAIGASMFFICIYIHI), 105-125 (WMSGITLLITLMATAFFGYVL), and 170-190 (FFALHFILPFAIISLSSLHVI). Residues His-75 and His-89 each coordinate heme b. 2 residues coordinate heme b: His-174 and His-188. Residue His-193 coordinates a ubiquinone. A run of 4 helical transmembrane segments spans residues 218–238 (YKDFLLLTLMVLSLFIIVSFF), 280–300 (LGGALALVMSIMILFTIPFTH), 312–332 (LYQLMFWTLVSTFITITWAAT), and 339–358 (FITISQVTSTLYFTFFISIP).

It belongs to the cytochrome b family. As to quaternary structure, the cytochrome bc1 complex contains 3 respiratory subunits (MT-CYB, CYC1 and UQCRFS1), 2 core proteins (UQCRC1 and UQCRC2) and probably 6 low-molecular weight proteins. It depends on heme b as a cofactor.

Its subcellular location is the mitochondrion inner membrane. In terms of biological role, component of the ubiquinol-cytochrome c reductase complex (complex III or cytochrome b-c1 complex) that is part of the mitochondrial respiratory chain. The b-c1 complex mediates electron transfer from ubiquinol to cytochrome c. Contributes to the generation of a proton gradient across the mitochondrial membrane that is then used for ATP synthesis. The chain is Cytochrome b (MT-CYB) from Malayopython reticulatus (Reticulate python).